Reading from the N-terminus, the 811-residue chain is Exocyst complex component 6B (811 aa).

Residues 50–119 (MEKLETRIRN…LVIAMEELKQ (70 aa)) adopt a coiled-coil conformation. The segment at 260-280 (STSPKSEQDSGILDVEDEEDD) is disordered.

This sequence belongs to the SEC15 family. In terms of assembly, the exocyst complex is composed of SEC3, SEC5, SEC6, SEC8, SEC10, SEC15, EXO70 and EXO84.

Functionally, component of the exocyst complex involved in the docking of exocytic vesicles with fusion sites on the plasma membrane. This is Exocyst complex component 6B (EXOC6B) from Homo sapiens (Human).